A 20-amino-acid chain; its full sequence is Maximin-Hu (20 aa).

The protein belongs to the bombinin family. As to expression, expressed by the skin glands.

The protein resides in the secreted. Its function is as follows. Has antimicrobial activity. This is Maximin-Hu from Bombina maxima (Giant fire-bellied toad).